The following is a 143-amino-acid chain: MAREYSRVDRIGDQMQRELAQLIQREVKDPRVGMVTVNDVKVSRDLGYADIYISLLSTEELTEDSPEVQDSLTVLNKASGFLRGQVGRAMKLRVVPHLRFHFDKLLGQSRKMDRLIREAVGDKPAVPRDDNDDPVSDNPERDA.

Residues 119–129 (AVGDKPAVPRD) show a composition bias toward basic and acidic residues. Residues 119 to 143 (AVGDKPAVPRDDNDDPVSDNPERDA) form a disordered region.

This sequence belongs to the RbfA family. As to quaternary structure, monomer. Binds 30S ribosomal subunits, but not 50S ribosomal subunits or 70S ribosomes.

It is found in the cytoplasm. In terms of biological role, one of several proteins that assist in the late maturation steps of the functional core of the 30S ribosomal subunit. Associates with free 30S ribosomal subunits (but not with 30S subunits that are part of 70S ribosomes or polysomes). Required for efficient processing of 16S rRNA. May interact with the 5'-terminal helix region of 16S rRNA. In Marinobacter nauticus (strain ATCC 700491 / DSM 11845 / VT8) (Marinobacter aquaeolei), this protein is Ribosome-binding factor A.